Consider the following 165-residue polypeptide: MRKKYRKVVVGGTFDRLHLGHKALLRKAFEVGKIVYIGLTSDEMVRNKPYAERILPYEHRLKDLLKFIEVNGYTNYRIIKIHTAIGFADSMKSLEAIVVSEETYKGALIVNRAREEKGLKPLDIVTIPIIKSYLGDKISSSLIRAGLIDPFGRPLHWKGNSPKDV.

It belongs to the eukaryotic CoaD family.

It is found in the cytoplasm. It carries out the reaction (R)-4'-phosphopantetheine + ATP + H(+) = 3'-dephospho-CoA + diphosphate. The protein operates within cofactor biosynthesis; coenzyme A biosynthesis. Functionally, reversibly transfers an adenylyl group from ATP to 4'-phosphopantetheine, yielding dephospho-CoA (dPCoA) and pyrophosphate. The sequence is that of Phosphopantetheine adenylyltransferase from Thermococcus kodakarensis (strain ATCC BAA-918 / JCM 12380 / KOD1) (Pyrococcus kodakaraensis (strain KOD1)).